The sequence spans 526 residues: Secreted triacylglycerol lipase LIP4 (526 aa).

The signal sequence occupies residues 1–26 (MVRLSYVRFGVAWCIAIIIVSGFSNA). Asn-186 carries an N-linked (GlcNAc...) asparagine glycan. Ser-195 serves as the catalytic Nucleophile. Asn-228 carries an N-linked (GlcNAc...) asparagine glycan. Active-site residues include Asp-342 and His-376. N-linked (GlcNAc...) asparagine glycosylation occurs at Asn-377. The disordered stretch occupies residues 412–526 (TGPSASSSAG…TMPAPPLMER (115 aa)). Composition is skewed to low complexity over residues 413 to 423 (GPSASSSAGGP) and 430 to 457 (TGGHHTQSGSAHGGHSSEHAASSTHAPA). N-linked (GlcNAc...) asparagine glycosylation is present at Asn-462. Low complexity predominate over residues 480–490 (PSTGATSPAPS). A compositionally biased stretch (pro residues) spans 516 to 526 (RTMPAPPLMER).

This sequence belongs to the AB hydrolase superfamily. Lipase family. Class Lip subfamily.

It is found in the secreted. The catalysed reaction is a triacylglycerol + H2O = a diacylglycerol + a fatty acid + H(+). It catalyses the reaction a monoacylglycerol + H2O = glycerol + a fatty acid + H(+). It carries out the reaction a diacylglycerol + H2O = a monoacylglycerol + a fatty acid + H(+). Functionally, secreted lipase that hydrolyzes acylglycerol lipids such as triacylglycerols and consequently releases free fatty acid. Can hydrolyze 4-nitrophenyl palmitate to release 4-nitrophenol and palmitoic acid. Due to an absence of fatty acid synthase genes in Malassezia species, secretory lipases are essential for the yeast to generate free fatty acids from degradation of sebum and assimilate them as lipid sources for growth. Plays important roles not only in lipid metabolism but also in the immune response of host cells and pathogenesis. This is Secreted triacylglycerol lipase LIP4 from Malassezia furfur (Pityriasis versicolor infection agent).